A 137-amino-acid chain; its full sequence is Methylglyoxal synthase (137 aa).

One can recognise an MGS-like domain in the interval 1-137 (MNIALVAHDK…KLSHNDEPPA (137 aa)). Substrate-binding positions include His-8, Lys-12, 34 to 37 (TGTT), and 54 to 55 (SG). Residue Asp-60 is the Proton donor/acceptor of the active site. His-87 is a binding site for substrate.

It belongs to the methylglyoxal synthase family.

The catalysed reaction is dihydroxyacetone phosphate = methylglyoxal + phosphate. Catalyzes the formation of methylglyoxal from dihydroxyacetone phosphate. This is Methylglyoxal synthase from Exiguobacterium sp. (strain ATCC BAA-1283 / AT1b).